Reading from the N-terminus, the 419-residue chain is MRFVDYVSIEVVAGKGGDGIISFRREAHVDKGGPDGGDGGWGGSIYFVGDSGMNTLLPFYQTKKIFGYNGENGRPKRQTGANGKDIFIKVPLGTQVFLKKSLICDIILEKKYLIAKGGRGGLGNFHFRNSKNKAPRISENGELGQNFYLDLQLKVMADIGLVGKPNAGKSTLLSLISNSKPKIANYEFTTLVPQLGVVKIYENSFVTADLPGLIQGASSGKGMGIIFLKHIERCRAIVHVIDFGSDNKNPIKDFIEIKSELEKFNKKLLDLNQIVIANKCDLPNFQFNLANFKRKFPKIKIIKSSLISAKQNEINIIKEKMFGLLGENQKKLEIQEINTSKIEFNLKAPFLIKSRNNGFFEITGELIQKIIQKIPLNSQENILRFNAKVKKIGLWDELIKKGIKPGDLVRIYEFEFHWN.

The 156-residue stretch at 1–156 folds into the Obg domain; that stretch reads MRFVDYVSIE…FYLDLQLKVM (156 aa). The 178-residue stretch at 157 to 334 folds into the OBG-type G domain; it reads ADIGLVGKPN…LGENQKKLEI (178 aa). Residues 163–170, 188–192, 209–212, 278–281, and 315–317 each bind GTP; these read GKPNAGKS, FTTLV, DLPG, NKCD, and NII. 2 residues coordinate Mg(2+): Ser170 and Thr190. The region spanning 342–419 is the OCT domain; that stretch reads IEFNLKAPFL…RIYEFEFHWN (78 aa).

Belongs to the TRAFAC class OBG-HflX-like GTPase superfamily. OBG GTPase family. As to quaternary structure, monomer. Mg(2+) is required as a cofactor.

Its subcellular location is the cytoplasm. Its function is as follows. An essential GTPase which binds GTP, GDP and possibly (p)ppGpp with moderate affinity, with high nucleotide exchange rates and a fairly low GTP hydrolysis rate. Plays a role in control of the cell cycle, stress response, ribosome biogenesis and in those bacteria that undergo differentiation, in morphogenesis control. The chain is GTPase Obg from Mesomycoplasma hyopneumoniae (strain 7448) (Mycoplasma hyopneumoniae).